A 259-amino-acid chain; its full sequence is MKDVQNEKDTRMVPLKKVGIKDLSWPLKILLKGDGYQPTVAQISCSVDLHREKRGIHMSRFIEVLNGLEEITPHIFEKVLDDLIVTMEAKRAHLEIRFPYFVWKESPVTRKVSPLKVDCFVEAEKEKNFSFKIGVRVPVHNLCPCSKEISDYGAHNQRAFVEIHVRTRKFIWFEDLVEIAERNASVPLYTLLKRPDEKFVTERAYENPKFVEDVARDVALDLEKDPRITWYRVYVESMESIHNHNAFACVEKGDFVLEG.

This sequence belongs to the GTP cyclohydrolase IV family.

It carries out the reaction GTP + H2O = 7,8-dihydroneopterin 3'-triphosphate + formate + H(+). Its pathway is cofactor biosynthesis; 7,8-dihydroneopterin triphosphate biosynthesis; 7,8-dihydroneopterin triphosphate from GTP: step 1/1. Functionally, converts GTP to 7,8-dihydroneopterin triphosphate. The protein is GTP cyclohydrolase FolE2 of Thermotoga neapolitana (strain ATCC 49049 / DSM 4359 / NBRC 107923 / NS-E).